The following is a 257-amino-acid chain: 5'-nucleotidase SurE (257 aa).

The a divalent metal cation site is built by Asp9, Asp10, Ser40, and Asn93.

This sequence belongs to the SurE nucleotidase family. A divalent metal cation is required as a cofactor.

It localises to the cytoplasm. The catalysed reaction is a ribonucleoside 5'-phosphate + H2O = a ribonucleoside + phosphate. Nucleotidase that shows phosphatase activity on nucleoside 5'-monophosphates. The polypeptide is 5'-nucleotidase SurE (Campylobacter hominis (strain ATCC BAA-381 / DSM 21671 / CCUG 45161 / LMG 19568 / NCTC 13146 / CH001A)).